Here is a 1123-residue protein sequence, read N- to C-terminus: Phytochrome 1 (1123 aa).

A compositionally biased stretch (low complexity) spans 1–15 (MSTPKKTYSSTSSAK). Residues 1 to 20 (MSTPKKTYSSTSSAKSKAHS) are disordered. The GAF domain maps to 216–395 (DIGLLCDTVV…VFGLQLNMEV (180 aa)). Cys-321 lines the phytochromobilin pocket. PAS domains are found at residues 610–681 (VANE…LRGE) and 744–815 (DYKT…TKFM). The 221-residue stretch at 895-1115 (YIRQEIKNPL…VVNVELPMAQ (221 aa)) folds into the Histidine kinase domain.

It belongs to the phytochrome family. In terms of assembly, homodimer. Contains one covalently linked phytochromobilin chromophore.

It is found in the cytoplasm. In terms of biological role, regulatory photoreceptor which exists in two forms that are reversibly interconvertible by light: the Pr form that absorbs maximally in the red region of the spectrum and the Pfr form that absorbs maximally in the far-red region. Photoconversion of Pr to Pfr induces an array of morphogenetic responses, whereas reconversion of Pfr to Pr cancels the induction of those responses. Pfr controls the expression of a number of nuclear genes including those encoding the small subunit of ribulose-bisphosphate carboxylase, chlorophyll A/B binding protein, protochlorophyllide reductase, rRNA, etc. It also controls the expression of its own gene(s) in a negative feedback fashion. Mediates chloroplast avoidance movement in cytoplasm. The sequence is that of Phytochrome 1 (PHY1) from Physcomitrium patens (Spreading-leaved earth moss).